Reading from the N-terminus, the 284-residue chain is Bifunctional protein FolD (284 aa).

NADP(+) is bound by residues 166–168 and isoleucine 232; that span reads GAS.

It belongs to the tetrahydrofolate dehydrogenase/cyclohydrolase family. In terms of assembly, homodimer.

The enzyme catalyses (6R)-5,10-methylene-5,6,7,8-tetrahydrofolate + NADP(+) = (6R)-5,10-methenyltetrahydrofolate + NADPH. The catalysed reaction is (6R)-5,10-methenyltetrahydrofolate + H2O = (6R)-10-formyltetrahydrofolate + H(+). Its pathway is one-carbon metabolism; tetrahydrofolate interconversion. In terms of biological role, catalyzes the oxidation of 5,10-methylenetetrahydrofolate to 5,10-methenyltetrahydrofolate and then the hydrolysis of 5,10-methenyltetrahydrofolate to 10-formyltetrahydrofolate. The polypeptide is Bifunctional protein FolD (Pseudomonas fluorescens (strain ATCC BAA-477 / NRRL B-23932 / Pf-5)).